A 282-amino-acid polypeptide reads, in one-letter code: Pantothenate synthetase (282 aa).

Position 30-37 (30-37 (MGYLHEGH)) interacts with ATP. H37 (proton donor) is an active-site residue. Q61 serves as a coordination point for (R)-pantoate. Q61 is a binding site for beta-alanine. 147–150 (GMKD) lines the ATP pocket. Q153 lines the (R)-pantoate pocket. ATP is bound by residues V176 and 184–187 (KSSR).

Belongs to the pantothenate synthetase family. In terms of assembly, homodimer.

It is found in the cytoplasm. It catalyses the reaction (R)-pantoate + beta-alanine + ATP = (R)-pantothenate + AMP + diphosphate + H(+). It participates in cofactor biosynthesis; (R)-pantothenate biosynthesis; (R)-pantothenate from (R)-pantoate and beta-alanine: step 1/1. Catalyzes the condensation of pantoate with beta-alanine in an ATP-dependent reaction via a pantoyl-adenylate intermediate. The sequence is that of Pantothenate synthetase from Bacillus cereus (strain B4264).